The sequence spans 111 residues: Fluoride-specific ion channel FluC (111 aa).

3 helical membrane-spanning segments follow: residues Gly-2–Leu-22, Gly-36–Ile-56, and Phe-71–Ile-91. Gly-79 and Thr-82 together coordinate Na(+).

This sequence belongs to the fluoride channel Fluc/FEX (TC 1.A.43) family.

The protein localises to the cell inner membrane. The catalysed reaction is fluoride(in) = fluoride(out). Its activity is regulated as follows. Na(+) is not transported, but it plays an essential structural role and its presence is essential for fluoride channel function. Functionally, fluoride-specific ion channel. Important for reducing fluoride concentration in the cell, thus reducing its toxicity. This Francisella tularensis subsp. holarctica (strain FTNF002-00 / FTA) protein is Fluoride-specific ion channel FluC.